The following is a 279-amino-acid chain: Lysozyme-like protein 2 (279 aa).

The N-terminal stretch at 1–19 is a signal peptide; the sequence is MIKLLVSFTILFVLSSARP. Positions 47 to 265 constitute a Ch-type lysozyme domain; sequence MGNAVDFSFP…AAAPKTEVNM (219 aa).

This sequence belongs to the glycosyl hydrolase 25 family. In terms of tissue distribution, expressed in intestine.

Involved in resistance to Gram-positive bacteria P.aeruginosa or B.thuringiensis infection. The protein is Lysozyme-like protein 2 of Caenorhabditis elegans.